The chain runs to 600 residues: Sodium- and chloride-dependent betaine transporter (600 aa).

The segment at 1–31 (MGTSEHVPLPTDEAKAKELEQSQHSEEPDRG) is disordered. Residues 1-38 (MGTSEHVPLPTDEAKAKELEQSQHSEEPDRGQWTGKFD) are Cytoplasmic-facing. A compositionally biased stretch (basic and acidic residues) spans 12 to 30 (DEAKAKELEQSQHSEEPDR). 3 helical membrane passes run 39–59 (FLMSMVAYAVGLGNVWRFPYL), 68–88 (FLVVYMIFFCLAAVPIFLMEV), and 116–136 (VVIAFMCIAYFCVIVAWAMFY). The Extracellular segment spans residues 137–207 (MISSIAWVFP…DTGDISEFGG (71 aa)). An N-linked (GlcNAc...) asparagine glycan is attached at Asn165. The next 2 helical transmembrane spans lie at 208–228 (IQWELFFIMAAAWLIVYFALW) and 237–257 (FVYFCALFPYVLIFILLIRGL). The N-linked (GlcNAc...) asparagine glycan is linked to Asn273. The next 7 helical transmembrane spans lie at 286-306 (AGTQVFYSYGVGFGALIALGS), 321-341 (MCFINGCTSITAGFAVFSILG), 378-398 (VFAVLFFLMITILGLDSQVCM), 420-440 (SLGIFCLFFFCIGIPMVTHSG), 454-474 (GYALLFVVFFEVVGLAYGFGA), 499-519 (FCAPATSLVLFVFCVVYYHPV), and 536-556 (WFLSSCSMVVIPGYAIYYLFF). Residues 557–600 (TNKHLTLKERVRKGLNLDGSFESPAKKNLVNNAEELKFIESSSQ) are Cytoplasmic-facing.

It belongs to the sodium:neurotransmitter symporter (SNF) family. As to expression, highly expressed in the head, the excretory canal, tail hypodermal cells, epidermis and vulval epithelial cells. Expressed in the excretory canal-associated neuron and in some non-amphidial sensory neurons in the head (at protein level).

The protein resides in the cell membrane. In terms of biological role, betaine transporter dependent on Na(+) and Cl(-) ions that functions primarily in the epidermis to clear betaine from the extracellular space. Elicits current in response to betaine but not in response to GABA, L-carnitine, sarcosine, glycine or dimethylglycine. The polypeptide is Sodium- and chloride-dependent betaine transporter (Caenorhabditis elegans).